The sequence spans 499 residues: MFENQLEIQRIQKADELRNLGVNPYPHFLKKDMNIKEFREKFAYIAENETKKADEEIVISGRIKLKRVAGRSTFANIEDESGNVQIYYSKDSIGEENYLKFKKNIEVGDIILVKGYAFLTGTGEFSIHVSDLILASKAISILPEKFHGLADKELRYRQRYLDMIMDPSVRVDFEKRSLIVRTIRRFFEDRGFLEVETPMMHQIAGGANAKPFITHHNALDIDRYLKIAPELYLKRLVVGGMNSVFEMNRCFRNEGMDLTHNPEFTSIEFYWAWHNYFEAMDLTEELFNELLKTLNLGEILDYGNLKIDFSKKFQRIKYLDALVLIGEISPEIIKDKDEILKKLKSDGFEANEKLDLGHLQAELFDNYVESKLINPTFITDFPVSISPLSRRSDKDPEIAERFELYIAGKELANAFNELNDPLDQYERFKAQIEAKKAGDDEAHEMDEDYVRALSYAMPPTVGWGLGVDRLVMILLNKASIRDVILFPAMKPIKNLDDKE.

The Mg(2+) site is built by E403 and E410.

Belongs to the class-II aminoacyl-tRNA synthetase family. As to quaternary structure, homodimer. Mg(2+) serves as cofactor.

It is found in the cytoplasm. The enzyme catalyses tRNA(Lys) + L-lysine + ATP = L-lysyl-tRNA(Lys) + AMP + diphosphate. This is Lysine--tRNA ligase from Campylobacter hominis (strain ATCC BAA-381 / DSM 21671 / CCUG 45161 / LMG 19568 / NCTC 13146 / CH001A).